A 915-amino-acid polypeptide reads, in one-letter code: Mitogen-activated protein kinase kinae kinase MST11 (915 aa).

3 disordered regions span residues 1 to 65 (MAML…PKHW), 134 to 171 (KKRN…NPSV), and 183 to 249 (GMAY…TRTD). Positions 26 to 45 (AQASYPPSRRAPAVPPASQS) are enriched in low complexity. Residues 65 to 128 (WDEDKVCEYL…FLSIKKLRTK (64 aa)) enclose the SAM domain. Low complexity-rich tracts occupy residues 152–163 (SESPSKPFHSSS) and 188–203 (PSRP…PLPS). Residues 263–353 (NQDVIRVIST…NRLILRRVPA (91 aa)) enclose the Ras-associating domain. The region spanning 641-911 (WMKGALIGQG…ADDLMLSPFL (271 aa)) is the Protein kinase domain. ATP is bound by residues 647–655 (IGQGSFGCV) and Lys-670.

It belongs to the protein kinase superfamily. STE Ser/Thr protein kinase family. MAP kinase kinase kinase subfamily. As to quaternary structure, interacts with the adapter protein MST50.

It carries out the reaction L-seryl-[protein] + ATP = O-phospho-L-seryl-[protein] + ADP + H(+). The catalysed reaction is L-threonyl-[protein] + ATP = O-phospho-L-threonyl-[protein] + ADP + H(+). Functionally, mitogen-activated protein kinase kinase kinase; part of the MST11-MST7-PMK1 MAP kinase (MAPK) cascade that is essential for appressorium formation, penetration and invasive growth. The MST11-MST7-PMK1 MAP kinase cascade transduces signals from the cell surface sensors MDB2 and SHO1 that recognize various surface signals such as surface hydrophobicity, cutin monomers, and rice leaf waxes. MST11 acts as the upstream MAPKKK that directly phosphorylates MAPKK MST7. MST11 but not MST7 may also be involved in the OSM1 MAPK pathway in response to osmotic stresses. The protein is Mitogen-activated protein kinase kinae kinase MST11 of Pyricularia oryzae (strain 70-15 / ATCC MYA-4617 / FGSC 8958) (Rice blast fungus).